Here is a 545-residue protein sequence, read N- to C-terminus: Membrane protein insertase YidC (545 aa).

The next 6 helical transmembrane spans lie at 10–30 (AVYL…FLFS), 319–339 (LLYF…NVIP), 341–361 (WGLS…PLTF), 407–427 (IGGC…YGLV), 467–487 (ILPF…SNVS), and 502–522 (MPIM…IYWI).

This sequence belongs to the OXA1/ALB3/YidC family. Type 1 subfamily. In terms of assembly, interacts with the Sec translocase complex via SecD. Specifically interacts with transmembrane segments of nascent integral membrane proteins during membrane integration.

Its subcellular location is the cell inner membrane. Required for the insertion and/or proper folding and/or complex formation of integral membrane proteins into the membrane. Involved in integration of membrane proteins that insert both dependently and independently of the Sec translocase complex, as well as at least some lipoproteins. Aids folding of multispanning membrane proteins. This chain is Membrane protein insertase YidC, found in Borrelia recurrentis (strain A1).